We begin with the raw amino-acid sequence, 256 residues long: Thiazole synthase (256 aa).

Lys-91 acts as the Schiff-base intermediate with DXP in catalysis. 1-deoxy-D-xylulose 5-phosphate-binding positions include Gly-152, 179–180 (AG), and 201–202 (NT).

The protein belongs to the ThiG family. In terms of assembly, homotetramer. Forms heterodimers with either ThiH or ThiS.

The protein localises to the cytoplasm. The catalysed reaction is [ThiS sulfur-carrier protein]-C-terminal-Gly-aminoethanethioate + 2-iminoacetate + 1-deoxy-D-xylulose 5-phosphate = [ThiS sulfur-carrier protein]-C-terminal Gly-Gly + 2-[(2R,5Z)-2-carboxy-4-methylthiazol-5(2H)-ylidene]ethyl phosphate + 2 H2O + H(+). It functions in the pathway cofactor biosynthesis; thiamine diphosphate biosynthesis. In terms of biological role, catalyzes the rearrangement of 1-deoxy-D-xylulose 5-phosphate (DXP) to produce the thiazole phosphate moiety of thiamine. Sulfur is provided by the thiocarboxylate moiety of the carrier protein ThiS. In vitro, sulfur can be provided by H(2)S. The protein is Thiazole synthase of Erwinia tasmaniensis (strain DSM 17950 / CFBP 7177 / CIP 109463 / NCPPB 4357 / Et1/99).